The chain runs to 440 residues: Guanine/hypoxanthine permease PbuG (440 aa).

Transmembrane regions (helical) follow at residues 18 to 38, 57 to 77, 81 to 101, 107 to 127, 142 to 162, 175 to 195, 201 to 221, 251 to 271, 291 to 311, 327 to 347, 354 to 374, 388 to 408, and 419 to 439; these read IIGGLTTFLSMAYILFVNPIT, AVFTATALASAAGCILMGLIA, IAIAPGMGLNAFFAFSVVLGM, AALSGVFISGLIFVALSLTGF, AVGAGIGLFITFVGLQGSGII, IHSGPVLLTIFGVIVTVILMV, GVFIGMLLTAVAGMIFGLVPV, MLIVILTFLFVGFFDTAGTLV, ALLADSSSIVIGAVLGTSTTT, GFAAIVTGILFLLATFFSPLL, VTAPALIIVGALMVAPLGKIA, MIMMPLTYSIATGIAIGFIFY, and KEVHPIMYGLFVVFILYFIFL.

This sequence belongs to the nucleobase:cation symporter-2 (NCS2) (TC 2.A.40) family. Azg-like subfamily.

Its subcellular location is the cell membrane. Involved in the uptake of the purine bases hypoxanthine and guanine. This is Guanine/hypoxanthine permease PbuG (pbuG) from Bacillus subtilis (strain 168).